The primary structure comprises 86 residues: Cell division topological specificity factor (86 aa).

Belongs to the MinE family.

Its function is as follows. Prevents the cell division inhibition by proteins MinC and MinD at internal division sites while permitting inhibition at polar sites. This ensures cell division at the proper site by restricting the formation of a division septum at the midpoint of the long axis of the cell. The sequence is that of Cell division topological specificity factor from Stenotrophomonas maltophilia (strain R551-3).